The chain runs to 514 residues: Pantetheinase (514 aa).

The N-terminal stretch at 1 to 22 (MITSRLLVYVAVLVLCVIKVSS) is a signal peptide. N-linked (GlcNAc...) asparagine glycosylation is present at Asn-39. The 268-residue stretch at 40 to 307 (ATLVPVSHEE…GKLLLSQLDS (268 aa)) folds into the CN hydrolase domain. Residue Glu-80 is the Proton acceptor of the active site. N-linked (GlcNAc...) asparagine glycans are attached at residues Asn-87 and Asn-147. The Proton donor role is filled by Lys-179. Residue Cys-212 is the Nucleophile of the active site. Asn-316 and Asn-354 each carry an N-linked (GlcNAc...) asparagine glycan. The GPI-anchor amidated aspartate moiety is linked to residue Asp-492. Residues 493-514 (PRSQVPGVMLLVIIPIVCSLSW) constitute a propeptide, removed in mature form.

The protein belongs to the carbon-nitrogen hydrolase superfamily. BTD/VNN family. As to quaternary structure, monomer.

Its subcellular location is the cell membrane. It carries out the reaction (R)-pantetheine + H2O = cysteamine + (R)-pantothenate. Its function is as follows. Amidohydrolase that hydrolyzes specifically one of the carboamide linkages in D-pantetheine thus recycling pantothenic acid (vitamin B5) and releasing cysteamine. The polypeptide is Pantetheinase (VNN1) (Canis lupus familiaris (Dog)).